The primary structure comprises 371 residues: Alanine dehydrogenase (371 aa).

Substrate-binding residues include Arg15 and Lys74. His95 functions as the Proton donor/acceptor in the catalytic mechanism. Residues Ser133, 177-178 (QA), Asp197, Ser219, 238-239 (VL), 266-269 (IAID), Arg279, and 298-301 (VANM) contribute to the NAD(+) site. Asp269 serves as the catalytic Proton donor/acceptor.

It belongs to the AlaDH/PNT family. In terms of assembly, homohexamer. Trimer of dimer.

The catalysed reaction is L-alanine + NAD(+) + H2O = pyruvate + NH4(+) + NADH + H(+). Its pathway is amino-acid degradation; L-alanine degradation via dehydrogenase pathway; NH(3) and pyruvate from L-alanine: step 1/1. Functionally, catalyzes the reversible reductive amination of pyruvate to L-alanine. May play a role in cell wall synthesis as L-alanine is an important constituent of the peptidoglycan layer. This is Alanine dehydrogenase (ald) from Staphylococcus saprophyticus subsp. saprophyticus (strain ATCC 15305 / DSM 20229 / NCIMB 8711 / NCTC 7292 / S-41).